Consider the following 385-residue polypeptide: 8-amino-7-oxononanoate synthase (385 aa).

R21 contacts substrate. Pyridoxal 5'-phosphate is bound at residue 108-109 (GF). H133 provides a ligand contact to substrate. Residues S179, H207, and T233 each coordinate pyridoxal 5'-phosphate. K236 is modified (N6-(pyridoxal phosphate)lysine). Residue T352 coordinates substrate.

The protein belongs to the class-II pyridoxal-phosphate-dependent aminotransferase family. BioF subfamily. Homodimer. Pyridoxal 5'-phosphate is required as a cofactor.

The catalysed reaction is 6-carboxyhexanoyl-[ACP] + L-alanine + H(+) = (8S)-8-amino-7-oxononanoate + holo-[ACP] + CO2. The protein operates within cofactor biosynthesis; biotin biosynthesis. Catalyzes the decarboxylative condensation of pimeloyl-[acyl-carrier protein] and L-alanine to produce 8-amino-7-oxononanoate (AON), [acyl-carrier protein], and carbon dioxide. The chain is 8-amino-7-oxononanoate synthase from Salmonella dublin (strain CT_02021853).